The chain runs to 364 residues: Geranylfarnesyl diphosphate synthase, chloroplastic (364 aa).

The N-terminal 51 residues, 1–51 (MSHCTIFLYKYFPGKPRYQHCSFLHPLNHKLKSLFLPITGSRFLSNSTFSV), are a transit peptide targeting the chloroplast. Isopentenyl diphosphate is bound by residues lysine 72, lysine 111, and histidine 143. Residues aspartate 150 and aspartate 156 each coordinate Mg(2+). Position 161 (arginine 161) interacts with dimethylallyl diphosphate. Arginine 162 is a binding site for isopentenyl diphosphate. Dimethylallyl diphosphate-binding residues include lysine 249, threonine 250, glutamine 287, aspartate 294, lysine 304, and lysine 314.

The protein belongs to the FPP/GGPP synthase family. As to quaternary structure, monomer. Mg(2+) is required as a cofactor. Strongly expressed in glandular trichomes, and, at low levels, in leaves, stems and flowers.

It localises to the plastid. It is found in the chloroplast. It carries out the reaction isopentenyl diphosphate + (2E,6E,10E)-geranylgeranyl diphosphate = (2E,6E,10E,14E)-geranylfarnesyl diphosphate + diphosphate. The enzyme catalyses 2 isopentenyl diphosphate + (2E,6E)-farnesyl diphosphate = (2E,6E,10E,14E)-geranylfarnesyl diphosphate + 2 diphosphate. The catalysed reaction is 3 isopentenyl diphosphate + (2E)-geranyl diphosphate = (2E,6E,10E,14E)-geranylfarnesyl diphosphate + 3 diphosphate. It catalyses the reaction 4 isopentenyl diphosphate + dimethylallyl diphosphate = (2E,6E,10E,14E)-geranylfarnesyl diphosphate + 4 diphosphate. Its pathway is secondary metabolite biosynthesis; terpenoid biosynthesis. The protein operates within isoprenoid biosynthesis. In terms of biological role, involved in the biosynthesis of leucosceptrane sesterterpenoids natural products, which are playing defensive roles toward herbivorus insects (e.g. Spodoptera exigua). Catalyzes the condensation of isopentenyl pyrophosphate (IDP) with the allylic pyrophosphates to yield geranylfarnesyl diphosphate (GFDP), the C(25) prenyl diphosphate precursor to all sesterterpenoids. Geranylgeranyl diphosphate (GGPP) is the preferred substrate, however dimethylallyl diphosphate (DMADP), farnesyl diphosphate (FDP) and geranyl diphosphate (GDP) can also be used as allylic substrate. In Leucosceptrum canum (Hairy white-wand), this protein is Geranylfarnesyl diphosphate synthase, chloroplastic.